Consider the following 66-residue polypeptide: Probable Sec-independent protein translocase protein TatE (66 aa).

The helical transmembrane segment at Met1–Gly21 threads the bilayer. The interval Glu46–Glu66 is disordered.

Belongs to the TatA/E family. TatE subfamily.

It is found in the cell inner membrane. Functionally, part of the twin-arginine translocation (Tat) system that transports large folded proteins containing a characteristic twin-arginine motif in their signal peptide across membranes. TatE shares overlapping functions with TatA. This is Probable Sec-independent protein translocase protein TatE from Edwardsiella ictaluri (strain 93-146).